Consider the following 420-residue polypeptide: Glucose-1-phosphate adenylyltransferase (420 aa).

Residues Tyr107, Gly173, 188–189 (EK), and Ser206 each bind alpha-D-glucose 1-phosphate.

It belongs to the bacterial/plant glucose-1-phosphate adenylyltransferase family. Homotetramer.

It carries out the reaction alpha-D-glucose 1-phosphate + ATP + H(+) = ADP-alpha-D-glucose + diphosphate. It functions in the pathway glycan biosynthesis; glycogen biosynthesis. Functionally, involved in the biosynthesis of ADP-glucose, a building block required for the elongation reactions to produce glycogen. Catalyzes the reaction between ATP and alpha-D-glucose 1-phosphate (G1P) to produce pyrophosphate and ADP-Glc. The polypeptide is Glucose-1-phosphate adenylyltransferase (Shewanella sp. (strain MR-4)).